The following is a 352-amino-acid chain: Glycerol-1-phosphate dehydrogenase [NAD(P)+] (352 aa).

NAD(+) contacts are provided by residues 91–95 (GRVID) and 113–116 (TVAS). Substrate is bound at residue Asp118. Ser122 is a binding site for NAD(+). Residue Glu169 coordinates substrate. Residues Glu169 and His249 each contribute to the Zn(2+) site. Residue His253 participates in substrate binding. His269 provides a ligand contact to Zn(2+).

This sequence belongs to the glycerol-1-phosphate dehydrogenase family. In terms of assembly, homodimer. Zn(2+) serves as cofactor.

Its subcellular location is the cytoplasm. It catalyses the reaction sn-glycerol 1-phosphate + NAD(+) = dihydroxyacetone phosphate + NADH + H(+). The catalysed reaction is sn-glycerol 1-phosphate + NADP(+) = dihydroxyacetone phosphate + NADPH + H(+). It functions in the pathway membrane lipid metabolism; glycerophospholipid metabolism. Functionally, catalyzes the NAD(P)H-dependent reduction of dihydroxyacetonephosphate (DHAP or glycerone phosphate) to glycerol 1-phosphate (G1P). The G1P thus generated is used as the glycerophosphate backbone of phospholipids in the cellular membranes of Archaea. In Caldivirga maquilingensis (strain ATCC 700844 / DSM 13496 / JCM 10307 / IC-167), this protein is Glycerol-1-phosphate dehydrogenase [NAD(P)+].